A 146-amino-acid polypeptide reads, in one-letter code: Snake venom vascular endothelial growth factor toxin (146 aa).

Positions 1 to 24 (MAVYLLAVAILFCIQGWPLGTVQG) are cleaved as a signal peptide. Gln25 carries the pyrrolidone carboxylic acid modification. 3 disulfide bridges follow: Cys38–Cys80, Cys69–Cys115, and Cys73–Cys117. Residues 118–146 (RPRSASGVNSRKHKRNPEEGEPRAKFPFV) form a disordered region. Residues 133–146 (NPEEGEPRAKFPFV) are compositionally biased toward basic and acidic residues.

It belongs to the PDGF/VEGF growth factor family. Snake venom VEGF subfamily. Homodimer; disulfide-linked. Interacts with VEGF receptor-1 (FLT1) with a high affinity, whereas it binds to VEGF receptor-2 (KDR) with a low affinity. Does not bind VEGF receptor-3 (FLT4). Expressed by the venom gland.

Its subcellular location is the secreted. In terms of biological role, snake venom VEGFs that may contribute to venom dispersion and prey subjugation by inducing vascular permeability and hypotension. This protein induces an increase in capillary permeability after intradermal injection, as well as a drastic hypotensive effect after intravenous injection. The hypotension is mediated by nitric oxide (NO), which is produced by VEGF-activated endothelium NO synthase. Also induces angiogenesis in vitro. Like other crotalid VEGFs, this protein interacts with VEGF receptor-1 (FLT1) with a high affinity, whereas it binds to VEGF receptor-2 (KDR) with a low affinity. The chain is Snake venom vascular endothelial growth factor toxin from Bothrops jararaca (Jararaca).